Reading from the N-terminus, the 357-residue chain is Holliday junction branch migration complex subunit RuvB (357 aa).

The interval 1–27 is disordered; it reads MGRFSNADGPGDDADEREVTPALTVGE. The tract at residues 1-195 is large ATPase domain (RuvB-L); sequence MGRFSNADGP…FGFTAHMDFY (195 aa). Residues Leu34, Arg35, Gly76, Lys79, Thr80, Ser81, 142-144, Arg185, Tyr195, and Arg232 each bind ATP; that span reads EDF. Residue Thr80 coordinates Mg(2+). A small ATPAse domain (RuvB-S) region spans residues 196–266; the sequence is EPAELERVLA…IAKYALEVYD (71 aa). The tract at residues 269–357 is head domain (RuvB-H); sequence ELGLDRLDRA…GGLGQVGLFE (89 aa). Residues Arg324 and Arg329 each coordinate DNA.

This sequence belongs to the RuvB family. In terms of assembly, homohexamer. Forms an RuvA(8)-RuvB(12)-Holliday junction (HJ) complex. HJ DNA is sandwiched between 2 RuvA tetramers; dsDNA enters through RuvA and exits via RuvB. An RuvB hexamer assembles on each DNA strand where it exits the tetramer. Each RuvB hexamer is contacted by two RuvA subunits (via domain III) on 2 adjacent RuvB subunits; this complex drives branch migration. In the full resolvosome a probable DNA-RuvA(4)-RuvB(12)-RuvC(2) complex forms which resolves the HJ.

Its subcellular location is the cytoplasm. The catalysed reaction is ATP + H2O = ADP + phosphate + H(+). In terms of biological role, the RuvA-RuvB-RuvC complex processes Holliday junction (HJ) DNA during genetic recombination and DNA repair, while the RuvA-RuvB complex plays an important role in the rescue of blocked DNA replication forks via replication fork reversal (RFR). RuvA specifically binds to HJ cruciform DNA, conferring on it an open structure. The RuvB hexamer acts as an ATP-dependent pump, pulling dsDNA into and through the RuvAB complex. RuvB forms 2 homohexamers on either side of HJ DNA bound by 1 or 2 RuvA tetramers; 4 subunits per hexamer contact DNA at a time. Coordinated motions by a converter formed by DNA-disengaged RuvB subunits stimulates ATP hydrolysis and nucleotide exchange. Immobilization of the converter enables RuvB to convert the ATP-contained energy into a lever motion, pulling 2 nucleotides of DNA out of the RuvA tetramer per ATP hydrolyzed, thus driving DNA branch migration. The RuvB motors rotate together with the DNA substrate, which together with the progressing nucleotide cycle form the mechanistic basis for DNA recombination by continuous HJ branch migration. Branch migration allows RuvC to scan DNA until it finds its consensus sequence, where it cleaves and resolves cruciform DNA. This chain is Holliday junction branch migration complex subunit RuvB, found in Mycolicibacterium gilvum (strain PYR-GCK) (Mycobacterium gilvum (strain PYR-GCK)).